The primary structure comprises 140 residues: Small ribosomal subunit protein uS11c (140 aa).

Belongs to the universal ribosomal protein uS11 family. As to quaternary structure, part of the 30S ribosomal subunit.

The protein resides in the plastid. The protein localises to the chloroplast. The sequence is that of Small ribosomal subunit protein uS11c from Pelargonium hortorum (Common geranium).